The following is a 299-amino-acid chain: Junctional adhesion molecule A (299 aa).

The N-terminal stretch at 1 to 27 (MGTKAQVERKLLCLFILAILLCSLALG) is a signal peptide. Ig-like V-type domains lie at 28 to 125 (SVTV…VKVK) and 135 to 228 (PTVN…NAVR). Residues 28-238 (SVTVHSSEPE…MEAVERNVGV (211 aa)) are Extracellular-facing. 2 disulfide bridges follow: C50–C109 and C153–C212. N-linked (GlcNAc...) asparagine glycosylation is present at N185. The helical transmembrane segment at 239–259 (IVAAVLVTLILLGILVFGIWF) threads the bilayer. Over 260–299 (AYSRGHFDRTKKGTSSKKVIYSQPSARSEGEFKQTSSFLV) the chain is Cytoplasmic. A phosphoserine mark is found at S281, S284, and S287.

This sequence belongs to the immunoglobulin superfamily. In terms of assembly, interacts with the ninth PDZ domain of MPDZ. Interacts with the first PDZ domain of PARD3. The association between PARD3 and PARD6B probably disrupts this interaction. Interacts with ITGAL (via I-domain). Interacts with CD151. (Microbial infection) Interacts with Mammalian reovirus sigma-1 capsid protein. As to quaternary structure, (Microbial infection) Interacts with Human Rotavirus strain Wa vp4 capsid protein. In terms of processing, N-glycosylated. Post-translationally, (Microbial infection) Cleaved by H.pylori virulence factor PqqE. Cleavage leads to altered tight junction functions. In terms of tissue distribution, expressed in endothelium, epithelium and leukocytes (at protein level).

The protein localises to the cell junction. Its subcellular location is the tight junction. It is found in the cell membrane. Its function is as follows. Seems to play a role in epithelial tight junction formation. Appears early in primordial forms of cell junctions and recruits PARD3. The association of the PARD6-PARD3 complex may prevent the interaction of PARD3 with JAM1, thereby preventing tight junction assembly. Plays a role in regulating monocyte transmigration involved in integrity of epithelial barrier. Ligand for integrin alpha-L/beta-2 involved in memory T-cell and neutrophil transmigration. Involved in platelet activation. Functionally, (Microbial infection) Acts as a receptor for Mammalian reovirus sigma-1. (Microbial infection) Acts as a receptor for Human Rotavirus strain Wa. In Homo sapiens (Human), this protein is Junctional adhesion molecule A (F11R).